Reading from the N-terminus, the 225-residue chain is Ribosome maturation factor RimM (225 aa).

A PRC barrel domain is found at 144–225; sequence ADEFYWVDLI…RIVVDWEADY (82 aa).

This sequence belongs to the RimM family. As to quaternary structure, binds ribosomal protein uS19.

It localises to the cytoplasm. Functionally, an accessory protein needed during the final step in the assembly of 30S ribosomal subunit, possibly for assembly of the head region. Essential for efficient processing of 16S rRNA. May be needed both before and after RbfA during the maturation of 16S rRNA. It has affinity for free ribosomal 30S subunits but not for 70S ribosomes. The protein is Ribosome maturation factor RimM of Burkholderia orbicola (strain AU 1054).